Reading from the N-terminus, the 805-residue chain is Polyribonucleotide nucleotidyltransferase (805 aa).

The Mg(2+) site is built by aspartate 491 and aspartate 497. The KH domain occupies 558–617; the sequence is PRMESMIIDKNKIKNVIGTGGKNVREICEKTGVKIEISQDGTVMIYAVSRDAVEEAKNMI. The 68-residue stretch at 627–694 folds into the S1 motif domain; it reads GKVFSGVISE…DKDHVQLSMR (68 aa). A disordered region spans residues 702 to 805; sequence DLLEHESYSS…GGGNKKPRFF (104 aa).

The protein belongs to the polyribonucleotide nucleotidyltransferase family. It depends on Mg(2+) as a cofactor.

It is found in the cytoplasm. The catalysed reaction is RNA(n+1) + phosphate = RNA(n) + a ribonucleoside 5'-diphosphate. Functionally, involved in mRNA degradation. Catalyzes the phosphorolysis of single-stranded polyribonucleotides processively in the 3'- to 5'-direction. This Anaplasma marginale (strain Florida) protein is Polyribonucleotide nucleotidyltransferase.